The chain runs to 2798 residues: Kinesin-like protein KIN-12F (2798 aa).

A disordered region spans residues 1 to 165 (MVRDLAAVRR…RPPMSSGQRG (165 aa)). 2 stretches are compositionally biased toward low complexity: residues 8-22 (VRRT…SSAS) and 31-58 (PVDA…QPPQ). The region spanning 210-547 (NVQVVIRVRP…LKFAQRARLI (338 aa)) is the Kinesin motor domain. 291-298 (GQTGSGKT) is a binding site for ATP. A compositionally biased stretch (acidic residues) spans 600–615 (DVDDGTESMNMDEEND). A disordered region spans residues 600–621 (DVDDGTESMNMDEENDNDAHDR). 5 coiled-coil regions span residues 792–835 (ELKR…HSSN), 890–987 (LAEE…HRRQ), 1014–1108 (LKRM…VMKE), 1281–1322 (QRAM…LKNE), and 2130–2333 (ELVD…VRQQ). Residues 2338–2359 (PSSGQATSSLEGGMGDFTDSSR) form a disordered region. 2 coiled-coil regions span residues 2361-2427 (SREI…VKSD) and 2545-2758 (ESKE…LKLK). A disordered region spans residues 2772–2798 (RSESSSLSSGRSRSPSVCRSPSISSFR). Positions 2774 to 2798 (ESSSLSSGRSRSPSVCRSPSISSFR) are enriched in low complexity.

This sequence belongs to the TRAFAC class myosin-kinesin ATPase superfamily. Kinesin family. KIN-12 subfamily.

In Oryza sativa subsp. japonica (Rice), this protein is Kinesin-like protein KIN-12F.